Here is a 793-residue protein sequence, read N- to C-terminus: Endonuclease MutS2 (793 aa).

Residue 335–342 participates in ATP binding; the sequence is GPNTGGKT. In terms of domain architecture, Smr spans 718–793; that stretch reads IDVRGYNLEE…ESGVTIVELR (76 aa).

The protein belongs to the DNA mismatch repair MutS family. MutS2 subfamily. In terms of assembly, homodimer. Binds to stalled ribosomes, contacting rRNA.

Endonuclease that is involved in the suppression of homologous recombination and thus may have a key role in the control of bacterial genetic diversity. In terms of biological role, acts as a ribosome collision sensor, splitting the ribosome into its 2 subunits. Detects stalled/collided 70S ribosomes which it binds and splits by an ATP-hydrolysis driven conformational change. Acts upstream of the ribosome quality control system (RQC), a ribosome-associated complex that mediates the extraction of incompletely synthesized nascent chains from stalled ribosomes and their subsequent degradation. Probably generates substrates for RQC. The protein is Endonuclease MutS2 of Acetivibrio thermocellus (strain ATCC 27405 / DSM 1237 / JCM 9322 / NBRC 103400 / NCIMB 10682 / NRRL B-4536 / VPI 7372) (Clostridium thermocellum).